Consider the following 152-residue polypeptide: Endoribonuclease YbeY (152 aa).

Residues histidine 111, histidine 115, and histidine 121 each coordinate Zn(2+).

The protein belongs to the endoribonuclease YbeY family. It depends on Zn(2+) as a cofactor.

The protein resides in the cytoplasm. Functionally, single strand-specific metallo-endoribonuclease involved in late-stage 70S ribosome quality control and in maturation of the 3' terminus of the 16S rRNA. This Pseudomonas fluorescens (strain ATCC BAA-477 / NRRL B-23932 / Pf-5) protein is Endoribonuclease YbeY.